The chain runs to 238 residues: Small ribosomal subunit protein uS3 (238 aa).

One can recognise a KH type-2 domain in the interval 39–107 (MREFIHDYAK…ELHLNIVEIR (69 aa)). The segment covering 212 to 222 (PQAHDRRHSEA) has biased composition (basic and acidic residues). A disordered region spans residues 212–238 (PQAHDRRHSEAQEGAAPRPPRRDRERA).

The protein belongs to the universal ribosomal protein uS3 family. In terms of assembly, part of the 30S ribosomal subunit. Forms a tight complex with proteins S10 and S14.

Binds the lower part of the 30S subunit head. Binds mRNA in the 70S ribosome, positioning it for translation. This chain is Small ribosomal subunit protein uS3, found in Cereibacter sphaeroides (strain ATCC 17029 / ATH 2.4.9) (Rhodobacter sphaeroides).